Reading from the N-terminus, the 644-residue chain is Exoribonuclease 2 (644 aa).

The region spanning arginine 189–threonine 516 is the RNB domain. Positions aspartate 561–valine 643 constitute an S1 motif domain.

It belongs to the RNR ribonuclease family. RNase II subfamily.

It localises to the cytoplasm. It catalyses the reaction Exonucleolytic cleavage in the 3'- to 5'-direction to yield nucleoside 5'-phosphates.. Its function is as follows. Involved in mRNA degradation. Hydrolyzes single-stranded polyribonucleotides processively in the 3' to 5' direction. This Yersinia pestis bv. Antiqua (strain Antiqua) protein is Exoribonuclease 2.